Here is a 251-residue protein sequence, read N- to C-terminus: Probable transcriptional regulatory protein MAB_2888c (251 aa).

Residues 1-20 (MSGHSKWATTKHQKAVKDAR) are disordered.

The protein belongs to the TACO1 family.

It localises to the cytoplasm. This is Probable transcriptional regulatory protein MAB_2888c from Mycobacteroides abscessus (strain ATCC 19977 / DSM 44196 / CCUG 20993 / CIP 104536 / JCM 13569 / NCTC 13031 / TMC 1543 / L948) (Mycobacterium abscessus).